The chain runs to 160 residues: Transcription elongation factor GreA (160 aa).

A coiled-coil region spans residues 14 to 38 (IKAELASLKKERPEVIKAIAEAREE).

It belongs to the GreA/GreB family.

Its function is as follows. Necessary for efficient RNA polymerase transcription elongation past template-encoded arresting sites. The arresting sites in DNA have the property of trapping a certain fraction of elongating RNA polymerases that pass through, resulting in locked ternary complexes. Cleavage of the nascent transcript by cleavage factors such as GreA or GreB allows the resumption of elongation from the new 3'terminus. GreA releases sequences of 2 to 3 nucleotides. The protein is Transcription elongation factor GreA of Maridesulfovibrio salexigens (strain ATCC 14822 / DSM 2638 / NCIMB 8403 / VKM B-1763) (Desulfovibrio salexigens).